A 132-amino-acid polypeptide reads, in one-letter code: Small ribosomal subunit protein uS8c (132 aa).

Belongs to the universal ribosomal protein uS8 family. As to quaternary structure, part of the 30S ribosomal subunit.

Its subcellular location is the plastid. The protein resides in the chloroplast. In terms of biological role, one of the primary rRNA binding proteins, it binds directly to 16S rRNA central domain where it helps coordinate assembly of the platform of the 30S subunit. The polypeptide is Small ribosomal subunit protein uS8c (rps8) (Cycas taitungensis (Prince sago)).